The primary structure comprises 253 residues: uncharacterized protein (253 aa).

An N-terminal signal peptide occupies residues 1 to 15 (MNRVILFHFHFFKNA).

This is an uncharacterized protein from Archaeoglobus fulgidus (strain ATCC 49558 / DSM 4304 / JCM 9628 / NBRC 100126 / VC-16).